A 245-amino-acid chain; its full sequence is 4-hydroxy-tetrahydrodipicolinate reductase (245 aa).

NAD(+) contacts are provided by residues 7 to 12 (GAKGKV), 75 to 77 (GTT), and 102 to 105 (APNF). His132 serves as the catalytic Proton donor/acceptor. Position 133 (His133) interacts with (S)-2,3,4,5-tetrahydrodipicolinate. Residue Lys136 is the Proton donor of the active site. Residue 142-143 (GT) participates in (S)-2,3,4,5-tetrahydrodipicolinate binding.

The protein belongs to the DapB family.

It is found in the cytoplasm. The catalysed reaction is (S)-2,3,4,5-tetrahydrodipicolinate + NAD(+) + H2O = (2S,4S)-4-hydroxy-2,3,4,5-tetrahydrodipicolinate + NADH + H(+). It carries out the reaction (S)-2,3,4,5-tetrahydrodipicolinate + NADP(+) + H2O = (2S,4S)-4-hydroxy-2,3,4,5-tetrahydrodipicolinate + NADPH + H(+). It functions in the pathway amino-acid biosynthesis; L-lysine biosynthesis via DAP pathway; (S)-tetrahydrodipicolinate from L-aspartate: step 4/4. Functionally, catalyzes the conversion of 4-hydroxy-tetrahydrodipicolinate (HTPA) to tetrahydrodipicolinate. The polypeptide is 4-hydroxy-tetrahydrodipicolinate reductase (Mycobacterium tuberculosis (strain ATCC 25177 / H37Ra)).